We begin with the raw amino-acid sequence, 317 residues long: Ribosomal protein L11 methyltransferase (317 aa).

Residues Thr158, Gly179, Asp201, and Asn244 each coordinate S-adenosyl-L-methionine.

The protein belongs to the methyltransferase superfamily. PrmA family.

It is found in the cytoplasm. The enzyme catalyses L-lysyl-[protein] + 3 S-adenosyl-L-methionine = N(6),N(6),N(6)-trimethyl-L-lysyl-[protein] + 3 S-adenosyl-L-homocysteine + 3 H(+). In terms of biological role, methylates ribosomal protein L11. The sequence is that of Ribosomal protein L11 methyltransferase from Streptococcus equi subsp. equi (strain 4047).